Consider the following 74-residue polypeptide: uncharacterized protein (74 aa).

Positions 29-63 form a coiled coil; sequence LNSKKSALQKDKELQQQAKAQESALAGEELRRRAL.

This is an uncharacterized protein from Pseudoalteromonas phage PM2 (Bacteriophage PM2).